The sequence spans 375 residues: Probable pectin lyase B (375 aa).

Residues 1–19 (MKYAAFLPTIGALVSQAIA) form the signal peptide. Cystine bridges form between Cys82–Cys101 and Cys91–Cys225. N-linked (GlcNAc...) asparagine glycosylation occurs at Asn128. Residue Arg255 is part of the active site. Residues Cys321 and Cys329 are joined by a disulfide bond.

This sequence belongs to the polysaccharide lyase 1 family.

Its subcellular location is the secreted. The enzyme catalyses Eliminative cleavage of (1-&gt;4)-alpha-D-galacturonan methyl ester to give oligosaccharides with 4-deoxy-6-O-methyl-alpha-D-galact-4-enuronosyl groups at their non-reducing ends.. Its function is as follows. Pectinolytic enzymes consist of four classes of enzymes: pectin lyase, polygalacturonase, pectin methylesterase and rhamnogalacturonase. Among pectinolytic enzymes, pectin lyase is the most important in depolymerization of pectin, since it cleaves internal glycosidic bonds of highly methylated pectins. The chain is Probable pectin lyase B (pelB) from Aspergillus fumigatus (strain CBS 144.89 / FGSC A1163 / CEA10) (Neosartorya fumigata).